The primary structure comprises 80 residues: DinI-like protein Z2083/ECs2153 (80 aa).

The polypeptide is DinI-like protein Z2083/ECs2153 (Escherichia coli O157:H7).